Reading from the N-terminus, the 291-residue chain is Hydroxysteroid 11-beta-dehydrogenase 1-like protein B (291 aa).

An N-terminal signal peptide occupies residues 1 to 17 (MAGVILLLLSLCVGYIA). NADP(+) contacts are provided by residues 40–66 (GSST…TARR), 91–92 (DM), and 118–120 (NHI). Ser170 provides a ligand contact to substrate. Catalysis depends on Tyr183, which acts as the Proton acceptor. Residues 183–187 (YCASK) and 216–222 (GYIDTEN) contribute to the NADP(+) site.

The protein belongs to the short-chain dehydrogenases/reductases (SDR) family.

It localises to the secreted. The enzyme catalyses cortisone + NADPH + H(+) = cortisol + NADP(+). In terms of biological role, unidirectional NADP(+)-dependent cortisol dehydrogenase (in vitro). The chain is Hydroxysteroid 11-beta-dehydrogenase 1-like protein B (hsd11b1l-b) from Xenopus laevis (African clawed frog).